The sequence spans 321 residues: Probable 1-aminocyclopropane-1-carboxylate oxidase (321 aa).

The region spanning 159–259 (PTFGTKVSNY…RMSIASFYNP (101 aa)) is the Fe2OG dioxygenase domain. The Fe cation site is built by histidine 183, aspartate 185, and histidine 240.

Belongs to the iron/ascorbate-dependent oxidoreductase family. It depends on Fe cation as a cofactor.

It carries out the reaction 1-aminocyclopropane-1-carboxylate + L-ascorbate + O2 = ethene + L-dehydroascorbate + hydrogen cyanide + CO2 + 2 H2O. It functions in the pathway alkene biosynthesis; ethylene biosynthesis via S-adenosyl-L-methionine; ethylene from S-adenosyl-L-methionine: step 2/2. This is Probable 1-aminocyclopropane-1-carboxylate oxidase (ACO) from Dianthus caryophyllus (Carnation).